The primary structure comprises 414 residues: Ribulose bisphosphate carboxylase large chain (414 aa).

Residues Asn102 and Thr152 each coordinate substrate. Lys154 serves as the catalytic Proton acceptor. Substrate is bound at residue Lys156. Mg(2+)-binding residues include Lys180, Asp182, and Glu183. Lys180 carries the post-translational modification N6-carboxylysine. His273 acts as the Proton acceptor in catalysis. Substrate is bound by residues Arg274, His306, and Ser358.

This sequence belongs to the RuBisCO large chain family. Type I subfamily. In terms of assembly, heterohexadecamer of 8 large chains and 8 small chains; disulfide-linked. The disulfide link is formed within the large subunit homodimers. Requires Mg(2+) as cofactor. In terms of processing, the disulfide bond which can form in the large chain dimeric partners within the hexadecamer appears to be associated with oxidative stress and protein turnover.

Its subcellular location is the plastid. The protein resides in the chloroplast. The catalysed reaction is 2 (2R)-3-phosphoglycerate + 2 H(+) = D-ribulose 1,5-bisphosphate + CO2 + H2O. It carries out the reaction D-ribulose 1,5-bisphosphate + O2 = 2-phosphoglycolate + (2R)-3-phosphoglycerate + 2 H(+). RuBisCO catalyzes two reactions: the carboxylation of D-ribulose 1,5-bisphosphate, the primary event in carbon dioxide fixation, as well as the oxidative fragmentation of the pentose substrate in the photorespiration process. Both reactions occur simultaneously and in competition at the same active site. In Antrophyum reticulatum (Ox-tongue fern), this protein is Ribulose bisphosphate carboxylase large chain (rbcL).